Reading from the N-terminus, the 117-residue chain is uncharacterized protein (117 aa).

Positions 1–12 (MAQNSVSLSAGD) are enriched in polar residues. Disordered regions lie at residues 1 to 30 (MAQN…NPSA) and 43 to 87 (VTRL…SPYP).

This is an uncharacterized protein from Mus musculus (Mouse).